Consider the following 895-residue polypeptide: Protein translocase subunit SecA (895 aa).

Residues Q87, 105 to 109 (GEGKT), and D512 contribute to the ATP site. A compositionally biased stretch (basic and acidic residues) spans 833-852 (TQEEVEQAERQRQEMAKRET). Residues 833-895 (TQEEVEQAER…KHCHGSKAKY (63 aa)) form a disordered region. Positions 877, 879, 888, and 889 each coordinate Zn(2+). Positions 883–895 (KKYKHCHGSKAKY) are enriched in basic residues.

This sequence belongs to the SecA family. In terms of assembly, monomer and homodimer. Part of the essential Sec protein translocation apparatus which comprises SecA, SecYEG and auxiliary proteins SecDF-YajC and YidC. Zn(2+) serves as cofactor.

The protein localises to the cell inner membrane. The protein resides in the cytoplasm. It carries out the reaction ATP + H2O + cellular proteinSide 1 = ADP + phosphate + cellular proteinSide 2.. Its function is as follows. Part of the Sec protein translocase complex. Interacts with the SecYEG preprotein conducting channel. Has a central role in coupling the hydrolysis of ATP to the transfer of proteins into and across the cell membrane, serving both as a receptor for the preprotein-SecB complex and as an ATP-driven molecular motor driving the stepwise translocation of polypeptide chains across the membrane. The chain is Protein translocase subunit SecA from Pasteurella multocida (strain Pm70).